Consider the following 373-residue polypeptide: Chaperone protein DnaJ (373 aa).

One can recognise a J domain in the interval 5-70 (DFYATLGVAR…EKRAMYDQYG (66 aa)). A CR-type zinc finger spans residues 134 to 212 (GVKKRINIPT…CRGAGRNKAV (79 aa)). 8 residues coordinate Zn(2+): C147, C150, C164, C167, C186, C189, C200, and C203. 4 CXXCXGXG motif repeats span residues 147 to 154 (CDVCNGSG), 164 to 171 (CPTCKGSG), 186 to 193 (CPTCHGAG), and 200 to 207 (CVKCRGAG).

The protein belongs to the DnaJ family. As to quaternary structure, homodimer. It depends on Zn(2+) as a cofactor.

It is found in the cytoplasm. Functionally, participates actively in the response to hyperosmotic and heat shock by preventing the aggregation of stress-denatured proteins and by disaggregating proteins, also in an autonomous, DnaK-independent fashion. Unfolded proteins bind initially to DnaJ; upon interaction with the DnaJ-bound protein, DnaK hydrolyzes its bound ATP, resulting in the formation of a stable complex. GrpE releases ADP from DnaK; ATP binding to DnaK triggers the release of the substrate protein, thus completing the reaction cycle. Several rounds of ATP-dependent interactions between DnaJ, DnaK and GrpE are required for fully efficient folding. Also involved, together with DnaK and GrpE, in the DNA replication of plasmids through activation of initiation proteins. The sequence is that of Chaperone protein DnaJ from Neisseria meningitidis serogroup C (strain 053442).